The chain runs to 253 residues: Proteasome subunit alpha type-7 (253 aa).

Belongs to the peptidase T1A family. The 26S proteasome consists of a 20S proteasome core and two 19S regulatory subunits. The 20S proteasome core is composed of 28 subunits that are arranged in four stacked rings, resulting in a barrel-shaped structure. The two end rings are each formed by seven alpha subunits, and the two central rings are each formed by seven beta subunits. The catalytic chamber with the active sites is on the inside of the barrel.

Its subcellular location is the cytoplasm. The protein localises to the nucleus. Its function is as follows. The proteasome is a multicatalytic proteinase complex which is characterized by its ability to cleave peptides with Arg, Phe, Tyr, Leu, and Glu adjacent to the leaving group at neutral or slightly basic pH. The proteasome has an ATP-dependent proteolytic activity. The polypeptide is Proteasome subunit alpha type-7 (pas-4) (Caenorhabditis elegans).